The chain runs to 711 residues: Ribosomal RNA large subunit methyltransferase K/L (711 aa).

In terms of domain architecture, THUMP spans 43-154 (LGYRITLWSR…RGQITIGLNF (112 aa)).

This sequence belongs to the methyltransferase superfamily. RlmKL family.

The protein resides in the cytoplasm. The catalysed reaction is guanosine(2445) in 23S rRNA + S-adenosyl-L-methionine = N(2)-methylguanosine(2445) in 23S rRNA + S-adenosyl-L-homocysteine + H(+). It catalyses the reaction guanosine(2069) in 23S rRNA + S-adenosyl-L-methionine = N(2)-methylguanosine(2069) in 23S rRNA + S-adenosyl-L-homocysteine + H(+). Its function is as follows. Specifically methylates the guanine in position 2445 (m2G2445) and the guanine in position 2069 (m7G2069) of 23S rRNA. The polypeptide is Ribosomal RNA large subunit methyltransferase K/L (Shewanella sediminis (strain HAW-EB3)).